Consider the following 236-residue polypeptide: Alpha-acetolactate decarboxylase (236 aa).

Belongs to the alpha-acetolactate decarboxylase family.

It carries out the reaction (2S)-2-acetolactate + H(+) = (R)-acetoin + CO2. Its pathway is polyol metabolism; (R,R)-butane-2,3-diol biosynthesis; (R,R)-butane-2,3-diol from pyruvate: step 2/3. In terms of biological role, converts acetolactate into acetoin. This chain is Alpha-acetolactate decarboxylase (aldB), found in Lactococcus lactis subsp. lactis (strain IL1403) (Streptococcus lactis).